A 309-amino-acid polypeptide reads, in one-letter code: Taste receptor type 2 member 8 (309 aa).

Topologically, residues 1 to 7 (MFSPADN) are extracellular. A helical transmembrane segment spans residues 8 to 28 (IFIILITGEFILGILGNGYIA). The Cytoplasmic portion of the chain corresponds to 29–50 (LVNWIDWIKKKKISTVDYILTN). The helical transmembrane segment at 51-71 (LVIARICLISVMVVNGIVIVL) threads the bilayer. The Extracellular portion of the chain corresponds to 72–82 (NPDVYTKNKQQ). The helical transmembrane segment at 83 to 103 (IVIFTFWTFANYLNMWITTCL) threads the bilayer. The Cytoplasmic segment spans residues 104-131 (NVFYFLKIASSSHPLFLWLKWKIDMVVH). The chain crosses the membrane as a helical span at residues 132-152 (WILLGCFAISLLVSLIAAIVL). At 153-184 (SCDYRFHAIAKHKRNITEMFHVSKIPYFEPLT) the chain is on the extracellular side. Asn167 carries N-linked (GlcNAc...) asparagine glycosylation. A helical membrane pass occupies residues 185–205 (LFNLFAIVPFIVSLISFFLLV). The Cytoplasmic segment spans residues 206–239 (RSLWRHTKQIKLYATGSRDPSTEVHVRAIKTMTS). The helical transmembrane segment at 240 to 260 (FIFFFFLYYISSILMTFSYLM) threads the bilayer. Residues 261-266 (TKYKLA) are Extracellular-facing. Residues 267-287 (VEFGEIAAILYPLGHSLILIV) traverse the membrane as a helical segment. Residues 288–309 (LNNKLRQTFVRMLTCRKIACMI) are Cytoplasmic-facing.

This sequence belongs to the G-protein coupled receptor T2R family. In terms of tissue distribution, expressed in subsets of taste receptor cells of the tongue and palate epithelium and exclusively in gustducin-positive cells.

It is found in the membrane. Receptor that may play a role in the perception of bitterness and is gustducin-linked. May play a role in sensing the chemical composition of the gastrointestinal content. The activity of this receptor may stimulate alpha gustducin, mediate PLC-beta-2 activation and lead to the gating of TRPM5. The polypeptide is Taste receptor type 2 member 8 (TAS2R8) (Homo sapiens (Human)).